A 216-amino-acid chain; its full sequence is Somatotropin (216 aa).

Residues 1-26 (MAASPRNSVLLAFALLCLPWPQEVGA) form the signal peptide. His-45 is a Zn(2+) binding site. Cys-78 and Cys-189 are disulfide-bonded. Ser-131 is subject to Phosphoserine. A Zn(2+)-binding site is contributed by Glu-198. A disulfide bridge connects residues Cys-206 and Cys-214.

This sequence belongs to the somatotropin/prolactin family.

The protein resides in the secreted. Plays an important role in growth control. Its major role in stimulating body growth is to stimulate the liver and other tissues to secrete IGF1. It stimulates both the differentiation and proliferation of myoblasts. It also stimulates amino acid uptake and protein synthesis in muscle and other tissues. This is Somatotropin (GH1) from Canis lupus familiaris (Dog).